The following is a 102-amino-acid chain: Small ribosomal subunit protein uS14 (102 aa).

Belongs to the universal ribosomal protein uS14 family. As to quaternary structure, part of the 30S ribosomal subunit. Contacts proteins S3 and S10.

Its function is as follows. Binds 16S rRNA, required for the assembly of 30S particles and may also be responsible for determining the conformation of the 16S rRNA at the A site. The chain is Small ribosomal subunit protein uS14 from Wolbachia sp. subsp. Brugia malayi (strain TRS).